The sequence spans 217 residues: Large ribosomal subunit protein bL25 (217 aa).

A disordered region spans residues Val-178–Glu-217. The segment covering Glu-184 to Val-205 has biased composition (acidic residues). The segment covering Gly-206 to Glu-217 has biased composition (basic and acidic residues).

The protein belongs to the bacterial ribosomal protein bL25 family. CTC subfamily. In terms of assembly, part of the 50S ribosomal subunit; part of the 5S rRNA/L5/L18/L25 subcomplex. Contacts the 5S rRNA. Binds to the 5S rRNA independently of L5 and L18.

Functionally, this is one of the proteins that binds to the 5S RNA in the ribosome where it forms part of the central protuberance. This Staphylococcus aureus (strain MRSA252) protein is Large ribosomal subunit protein bL25.